Consider the following 221-residue polypeptide: Glutathione peroxidase 6 (221 aa).

Residues 1–19 (MFQQFQASCLVLFFLVGFA) form the signal peptide. Residue U73 is part of the active site. Position 73 (U73) is a non-standard amino acid, selenocysteine.

It belongs to the glutathione peroxidase family. As to expression, expressed in olfactory epithelium and embryos.

It localises to the secreted. The enzyme catalyses 2 glutathione + H2O2 = glutathione disulfide + 2 H2O. This chain is Glutathione peroxidase 6 (GPX6), found in Homo sapiens (Human).